The following is a 261-amino-acid chain: Caveolae-associated protein 3 (261 aa).

Residues 1 to 84 (MRESALERGP…SNTLAQLLAK (84 aa)) form an interaction with CAVIN1 region. The leucine-zipper stretch occupies residues 20–78 (VHAVTVVTLLEKLASMLETLRERQGGLARRQGGLAGSVRRIQSGLGALSRSHDTTSNTL). S62 and S70 each carry phosphoserine. K128 is covalently cross-linked (Glycyl lysine isopeptide (Lys-Gly) (interchain with G-Cter in SUMO2)). The segment at 135–203 (ASAFQKAPEP…SGRKGPAAPP (69 aa)) is interaction with CAV1. The tract at residues 139 to 261 (QKAPEPLGPA…EALLQMESVA (123 aa)) is disordered. A compositionally biased stretch (acidic residues) spans 158 to 170 (LEAEVGESSDEEP). A phosphoserine mark is found at S165, S166, and S173. Positions 200 to 212 (AAPPPTPVKPPRL) are enriched in pro residues. Over residues 213–231 (GPGRSAEAQPEAQPALEPT) the composition is skewed to low complexity.

This sequence belongs to the CAVIN family. Component of the CAVIN complex composed of CAVIN1, CAVIN2, CAVIN3 and CAVIN4. Interacts with PRKCD and with phosphatidylserine. Phosphatidylserine may form a bridge between PKC and PKC-binding partners and stabilize the binding. Interacts with PER2. Interacts with CAVIN1. Interacts (via leucine-zipper domain) with CAV1 in a cholesterol-sensitive manner. Interacts with EPS15L1. In vitro, phosphorylated by PRKCD. Skeletal muscle, liver, stomach, lung, kidney and heart (at protein level). Strongly expressed in mammary and epithelial cells.

It localises to the cytoplasm. It is found in the membrane. The protein localises to the caveola. Its subcellular location is the cytosol. Functionally, regulates the traffic and/or budding of caveolae. Plays a role in caveola formation in a tissue-specific manner. Required for the formation of caveolae in smooth muscle but not in the lung and heart endothelial cells. Regulates the equilibrium between cell surface-associated and cell surface-dissociated caveolae by promoting the rapid release of caveolae from the cell surface. Plays a role in the regulation of the circadian clock. Modulates the period length and phase of circadian gene expression and also regulates expression and interaction of the core clock components PER1/2 and CRY1/2. This is Caveolae-associated protein 3 from Homo sapiens (Human).